A 290-amino-acid chain; its full sequence is Protein-glutamine deamidase Cif (290 aa).

Positions 1–26 are disordered; sequence MKISPNTISPSQSDPRMSTNVSQRSR. Catalysis depends on residues Cys117, His173, and Gln193.

This sequence belongs to the Cif family.

The protein localises to the secreted. It localises to the host nucleus. The catalysed reaction is L-glutaminyl-[protein] + H2O = L-glutamyl-[protein] + NH4(+). In terms of biological role, protein-glutamine deamidase effector that inhibits the host cell cycle and other key cellular processes such as the actin network and programmed-cell death. Acts by mediating the side chain deamidation of 'Gln-40' of host NEDD8, converting it to glutamate, thereby abolishing the activity of cullin-RING-based E3 ubiquitin-protein ligase complexes (CRL complexes). Inactivation of CRL complexes prevents ubiquitination and subsequent degradation of the cyclin-dependent kinase inhibitors CDKN1A/p21 and CDKN1B/p27, leading to G1 and G2 cell cycle arrests in host cells. Also able to catalyze deamidation of 'Gln-40' of host ubiquitin in vitro; however, NEDD8 constitutes the preferred substrate in vivo. This is Protein-glutamine deamidase Cif from Yersinia pseudotuberculosis serotype O:3 (strain YPIII).